A 173-amino-acid chain; its full sequence is Cell division protein SepF (173 aa).

The segment at S17–H85 is disordered. Residues S35–A52 show a composition bias toward low complexity.

Belongs to the SepF family. In terms of assembly, homodimer. Interacts with FtsZ.

The protein localises to the cytoplasm. Cell division protein that is part of the divisome complex and is recruited early to the Z-ring. Probably stimulates Z-ring formation, perhaps through the cross-linking of FtsZ protofilaments. Its function overlaps with FtsA. This is Cell division protein SepF from Kocuria rhizophila (strain ATCC 9341 / DSM 348 / NBRC 103217 / DC2201).